A 1203-amino-acid polypeptide reads, in one-letter code: MAGHDVQYGKHRTRRSFSRIKEVLDLPNLIEIQTDSFKAFLDHGLKEVFEDVLPISNFTDTMELEFVGYEIKEPKYTLEEARIHDASYSAPIFVTFRLINKETGEIKTQEVFFGDFPIMTEMGTFIINGGERIIVSQLVRSPGVYFNDKVDKNGKVGYGSTVIPNRGAWLELESDSKDITYTRIDRTRKIPFTTLVRALGFSGDDEIFDIFGDSELVRNTVEKDIHKNPMDSRTDEALKEIYERLRPGEPKTAESSRSLLVARFFDPRRYDLAAVGRYKINKKLNVKTRLLNQTIAEPLVDPETGEILVEAGTIMTRSVIESIESHLDGDLNKIVYIPNDAAVVTEPVVLQKFKVVAPTDPDRVVTIIGNANPDDKVRTVTPADILAEMSYFLNLAEGLGRVDDIDHLGNRRIRAVGELLANQVRLGLSRMERNVRERMSVQDNEVLTPQQIINIRPVTAAVKEFFGSSQLSQFMDQHNPLSELSHKRRLSALGPGGLTRDRAGYEVRDVHYTHYGRMCPIETPEGPNIGLINNLSSYGHLNKYGFVQTPYRKVDRETGVVTNEIVWLTADEEDEYTVAQANSRLNEDGTFAEKIVMGRHQGVNQEYPANIVDYMDVSPKQVVAVATACIPFLENDDSNRALMGANMQRQAVPLINPQAPYVGTGMEYQAAHDSGAAVIAQYNGKVTYADADKVEVRREDGSLDVYHIQKFRRSNSGTAYNQRTLVKVGDVVEKGDFIADGPSMENGEMALGQNPIVAYMTWEGYNFEDAVIMSERLVKDDVYTSVHLEEYESETRDTKLGPEEITREIPNVGEDALKDLDEMGIIRIGAEVKEGDILVGKVTPKGEKDLSAEERLLHAIFGDKSREVRDTSLRVPHGADGVVRDVKIFTRVNGDELQSGVNMLVRVYIAQKRKIKVGDKMAGRHGNKGVVSRIVPVEDMPYLPDGTPVDIMLNPLGVPSRMNIGQVMELHLGMAARTLGIHIATPVFDGASSEDLWSTVKEAGMDSDAKTILYDGRTGEPFDNRVSVGVMYMIKLHHMVDDKLHARSVGPYSTVTQQPLGGKAQFGGQRFGEMEVWALEAYGASNVLQEILTYKSDDINGRLKAYEAITKGKPIPKPGVPESFRVLVKELQSLGLDMRVLDEDDQEVELRDLDEGMDEDVIHVDDLEKAREKAAQEAKAAFEAEEAEKATKAEATEEAAEQE.

The segment covering 1174-1195 has biased composition (basic and acidic residues); it reads AAQEAKAAFEAEEAEKATKAEA. The disordered stretch occupies residues 1174 to 1203; that stretch reads AAQEAKAAFEAEEAEKATKAEATEEAAEQE.

Belongs to the RNA polymerase beta chain family. As to quaternary structure, the RNAP catalytic core consists of 2 alpha, 1 beta, 1 beta' and 1 omega subunit. When a sigma factor is associated with the core the holoenzyme is formed, which can initiate transcription.

The enzyme catalyses RNA(n) + a ribonucleoside 5'-triphosphate = RNA(n+1) + diphosphate. Its function is as follows. DNA-dependent RNA polymerase catalyzes the transcription of DNA into RNA using the four ribonucleoside triphosphates as substrates. The sequence is that of DNA-directed RNA polymerase subunit beta from Streptococcus pneumoniae serotype 19F (strain G54).